The primary structure comprises 80 residues: NAD(P)H-quinone oxidoreductase subunit O (80 aa).

It belongs to the complex I NdhO subunit family. NDH-1 can be composed of about 15 different subunits; different subcomplexes with different compositions have been identified which probably have different functions.

The protein resides in the cellular thylakoid membrane. It catalyses the reaction a plastoquinone + NADH + (n+1) H(+)(in) = a plastoquinol + NAD(+) + n H(+)(out). The catalysed reaction is a plastoquinone + NADPH + (n+1) H(+)(in) = a plastoquinol + NADP(+) + n H(+)(out). In terms of biological role, NDH-1 shuttles electrons from an unknown electron donor, via FMN and iron-sulfur (Fe-S) centers, to quinones in the respiratory and/or the photosynthetic chain. The immediate electron acceptor for the enzyme in this species is believed to be plastoquinone. Couples the redox reaction to proton translocation, and thus conserves the redox energy in a proton gradient. Cyanobacterial NDH-1 also plays a role in inorganic carbon-concentration. This Prochlorococcus marinus (strain MIT 9515) protein is NAD(P)H-quinone oxidoreductase subunit O.